We begin with the raw amino-acid sequence, 380 residues long: 1-deoxy-D-xylulose 5-phosphate reductoisomerase (380 aa).

Residues S10, G11, S12, I13, G36, K37, N38, and N120 each contribute to the NADPH site. K121 lines the 1-deoxy-D-xylulose 5-phosphate pocket. Position 122 (E122) interacts with NADPH. A Mn(2+)-binding site is contributed by D146. 4 residues coordinate 1-deoxy-D-xylulose 5-phosphate: S147, E148, S172, and H195. E148 serves as a coordination point for Mn(2+). Residue G201 coordinates NADPH. 4 residues coordinate 1-deoxy-D-xylulose 5-phosphate: S208, N213, K214, and E217. Residue E217 participates in Mn(2+) binding.

Belongs to the DXR family. Requires Mg(2+) as cofactor. Mn(2+) serves as cofactor.

It catalyses the reaction 2-C-methyl-D-erythritol 4-phosphate + NADP(+) = 1-deoxy-D-xylulose 5-phosphate + NADPH + H(+). The protein operates within isoprenoid biosynthesis; isopentenyl diphosphate biosynthesis via DXP pathway; isopentenyl diphosphate from 1-deoxy-D-xylulose 5-phosphate: step 1/6. Catalyzes the NADPH-dependent rearrangement and reduction of 1-deoxy-D-xylulose-5-phosphate (DXP) to 2-C-methyl-D-erythritol 4-phosphate (MEP). This Bacillus cereus (strain AH187) protein is 1-deoxy-D-xylulose 5-phosphate reductoisomerase.